A 544-amino-acid polypeptide reads, in one-letter code: MKPAELKRLYRIVKVQLEYGLDELLPEHHLTRAPLLARKSLFWLRNQHADKALGDRLRLALQELGPVWIKFGQMMSTRRDLFPPYIADPLAMLQDKVAPFDGLQAKQLIEEELGAPLETWFDDFDIKPLASASIAQVHTAKLKSNGRDVVLKVIRPDIRPQIDADIKLMYRVARIVAKALPEARRLKPVEVVREYEKTLLDELDLRREAANAIQLRRNFENSEELYVPEVLTDFCNETVMVSERIYGIQVSDLAGLHANGTNMKLLAERGVSVFFTQVFRDSFFHADMHPGNVFVNPNHPENPQWIGLDCGIVGTLNSEDKRYLAENFLAFFNRDYRRVAQLHVDSGWVPLDTNVDEFEVAIRMVCEPIFAKPLCEISFGHVLLNLFNTARRFNMEVQPQLVLLQKTLLYVEGLGRQLYPQLDLWQTAKPFLEKWMANQVGPQAFLHALKERAPLWFEKMPELPELLYDSLKQGRNLNQRLDNLYQGYRQSKRQQGTGKFLFGVGATLVVCSAIWISNQLEPLAIGSATIGVLCWLLSWRAYRQ.

Positions aspartate 123–leucine 501 constitute a Protein kinase domain. ATP is bound by residues leucine 129 to valine 137 and lysine 152. The active-site Proton acceptor is aspartate 287. The next 2 helical transmembrane spans lie at glycine 496–isoleucine 516 and glutamine 519–tryptophan 539.

It belongs to the ABC1 family. UbiB subfamily.

Its subcellular location is the cell inner membrane. Its pathway is cofactor biosynthesis; ubiquinone biosynthesis [regulation]. In terms of biological role, is probably a protein kinase regulator of UbiI activity which is involved in aerobic coenzyme Q (ubiquinone) biosynthesis. The protein is Probable protein kinase UbiB of Vibrio cholerae serotype O1 (strain ATCC 39541 / Classical Ogawa 395 / O395).